We begin with the raw amino-acid sequence, 61 residues long: Small ribosomal subunit protein uS14 (61 aa).

Zn(2+)-binding residues include Cys-24, Cys-27, Cys-40, and Cys-43.

It belongs to the universal ribosomal protein uS14 family. Zinc-binding uS14 subfamily. In terms of assembly, part of the 30S ribosomal subunit. Contacts proteins S3 and S10. Zn(2+) is required as a cofactor.

In terms of biological role, binds 16S rRNA, required for the assembly of 30S particles and may also be responsible for determining the conformation of the 16S rRNA at the A site. This Acidothermus cellulolyticus (strain ATCC 43068 / DSM 8971 / 11B) protein is Small ribosomal subunit protein uS14.